The following is a 179-amino-acid chain: tRNA (cytidine(56)-2'-O)-methyltransferase (179 aa).

Position 84 (L84) interacts with S-adenosyl-L-methionine.

Belongs to the aTrm56 family. As to quaternary structure, homodimer.

It localises to the cytoplasm. It carries out the reaction cytidine(56) in tRNA + S-adenosyl-L-methionine = 2'-O-methylcytidine(56) in tRNA + S-adenosyl-L-homocysteine + H(+). Specifically catalyzes the AdoMet-dependent 2'-O-ribose methylation of cytidine at position 56 in tRNAs. The chain is tRNA (cytidine(56)-2'-O)-methyltransferase from Methanothermobacter thermautotrophicus (strain ATCC 29096 / DSM 1053 / JCM 10044 / NBRC 100330 / Delta H) (Methanobacterium thermoautotrophicum).